We begin with the raw amino-acid sequence, 757 residues long: Cell cycle progression protein 1 (757 aa).

Over 1–217 (MSENSSDSDS…KRQFSSGLNK (217 aa)) the chain is Cytoplasmic. The interaction with MCF2L and SRC stretch occupies residues 1–308 (MSENSSDSDS…QKTNLATENQ (308 aa)). The segment at 152–207 (VFSSQPSDDESSSDETSNQPSPAFRRRRARKKTVSASESEDRLVAEQETEPSKELS) is disordered. A compositionally biased stretch (basic residues) spans 175–184 (FRRRRARKKT). The residue at position 186 (serine 186) is a Phosphoserine. Basic and acidic residues predominate over residues 190–207 (SEDRLVAEQETEPSKELS). The chain crosses the membrane as a helical; Signal-anchor for type II membrane protein span at residues 218–238 (CVILALVIAISMGFGHFYGTI). The Lumenal segment spans residues 239–757 (QIQKRQQLVR…YIKPCHYSSL (519 aa)). 2 coiled-coil regions span residues 248 to 272 (RKIH…QESF) and 306 to 450 (ENQY…LWER). A compositionally biased stretch (basic and acidic residues) spans 458–468 (QNGKQGTDGKK). The disordered stretch occupies residues 458–483 (QNGKQGTDGKKKGGRGSHRAKNKSKE). The segment covering 469-479 (KGGRGSHRAKN) has biased composition (basic residues). Residues 504-530 (VRHHKEKIKQAKEAVKENLKKFSDSVK) are a coiled coil.

It belongs to the CCPG1 family. In terms of assembly, interacts with MCF2L. May interact with MCF2, ARHGEF1, BCR, VAV1 and FGD1, but not with TIAM1. Interacts with GTP-bound CDC42 and SRC.

Its subcellular location is the cytoplasmic granule membrane. Its function is as follows. Acts as an assembly platform for Rho protein signaling complexes. Limits guanine nucleotide exchange activity of MCF2L toward RHOA, which results in an inhibition of both its transcriptional activation ability and its transforming activity. Does not inhibit activity of MCF2L toward CDC42, or activity of MCF2 toward either RHOA or CDC42. May be involved in cell cycle regulation. The protein is Cell cycle progression protein 1 (CCPG1) of Homo sapiens (Human).